Here is a 369-residue protein sequence, read N- to C-terminus: Nuclear hormone receptor family member nhr-64 (369 aa).

The segment at residues 67–142 (EKCQVDKAKR…ASTRGLRTTV (76 aa)) is a DNA-binding region (nuclear receptor). NR C4-type zinc fingers lie at residues 70–90 (QVDKAKRNSCRKCRFDVCLRK) and 106–130 (PANPLSNGSNGGIVPDDPLLDTLIR). The NR LBD domain maps to 120 to 352 (PDDPLLDTLI…NLMLELMLPN (233 aa)).

The protein belongs to the nuclear hormone receptor family.

It localises to the nucleus. Orphan nuclear receptor. This Caenorhabditis elegans protein is Nuclear hormone receptor family member nhr-64 (nhr-64).